Here is a 345-residue protein sequence, read N- to C-terminus: MSITPQEALQRTIEHREIFHDEMLHLMRMIMRGELSPVMTAAIVTGLRVKKETIGEITAAAQVMRELSRKVAVADTTHLVDIVGTGGDGANTFNISTCAMFVAAAAGAKTAKHGGRGVSSKSGSADVMESLGVHIDLPPEAIARCIADTGIGFMFAPNHHPAMKNVAPVRKELGVRTLFNILGPLTNPAGAPNILMGVFHPDLVGIQVRALQRLGAEHALVVYGRDGMDEVSLGAATMVGELKNGEITEYEIHPEDFGLAMSSNRALKVETPEQSREMLLSVLRGEPGSAREIVCLNAGVALYAANVAATMADGIARARAALDSGAALARLEQLVARTRALAAGG.

Residues glycine 84, 87-88, threonine 92, 94-97, 112-120, and serine 124 each bind 5-phospho-alpha-D-ribose 1-diphosphate; these read GD, NIST, and KHGGRGVSS. Glycine 84 is an anthranilate binding site. Serine 96 contributes to the Mg(2+) binding site. Arginine 170 serves as a coordination point for anthranilate. Residues aspartate 229 and glutamate 230 each coordinate Mg(2+).

The protein belongs to the anthranilate phosphoribosyltransferase family. In terms of assembly, homodimer. Requires Mg(2+) as cofactor.

The enzyme catalyses N-(5-phospho-beta-D-ribosyl)anthranilate + diphosphate = 5-phospho-alpha-D-ribose 1-diphosphate + anthranilate. It functions in the pathway amino-acid biosynthesis; L-tryptophan biosynthesis; L-tryptophan from chorismate: step 2/5. Functionally, catalyzes the transfer of the phosphoribosyl group of 5-phosphorylribose-1-pyrophosphate (PRPP) to anthranilate to yield N-(5'-phosphoribosyl)-anthranilate (PRA). This Paracidovorax citrulli (strain AAC00-1) (Acidovorax citrulli) protein is Anthranilate phosphoribosyltransferase.